The primary structure comprises 335 residues: Matrix protein (335 aa).

Belongs to the morbillivirus/respirovirus/rubulavirus M protein family. Homodimer. Dimerization is critical for virion formation. Interacts with host ANP32B.

The protein localises to the virion. Its subcellular location is the host cell membrane. Its function is as follows. The M protein has a crucial role in virus assembly and interacts with the RNP complex as well as with the viral membrane. Associates with phosphatidylserine (PS) and phosphatidylinositol 4,5-bisphosphate (PIP2) at the plasma membrane. Interaction with PIP2 triggers matrix protein lattice polymerization. Matrix proteins induce host membrane deformation and curvature necessary for virion assembly/budding. The chain is Matrix protein (M) from Measles virus (strain Edmonston-AIK-C vaccine) (MeV).